The sequence spans 374 residues: Ribosomal RNA large subunit methyltransferase G (374 aa).

The protein belongs to the methyltransferase superfamily. RlmG family.

It localises to the cytoplasm. It carries out the reaction guanosine(1835) in 23S rRNA + S-adenosyl-L-methionine = N(2)-methylguanosine(1835) in 23S rRNA + S-adenosyl-L-homocysteine + H(+). In terms of biological role, specifically methylates the guanine in position 1835 (m2G1835) of 23S rRNA. This chain is Ribosomal RNA large subunit methyltransferase G, found in Pseudomonas syringae pv. tomato (strain ATCC BAA-871 / DC3000).